Reading from the N-terminus, the 893-residue chain is UPF0182 protein CLM_0018 (893 aa).

Helical transmembrane passes span 9-29 (IPLF…NFII), 49-69 (AIII…WMYY), 94-114 (LFFI…SSSY), 154-174 (VIIS…FILE), 202-222 (LAIV…IKIW), 246-266 (FYKI…LSIV), and 273-293 (VSVC…ASFL).

Belongs to the UPF0182 family.

The protein localises to the cell membrane. The polypeptide is UPF0182 protein CLM_0018 (Clostridium botulinum (strain Kyoto / Type A2)).